The sequence spans 753 residues: Translation initiation factor IF-2 (753 aa).

Residues 1–166 (MSEKPRRDTG…PVMRPRGPVA (166 aa)) form a disordered region. Low complexity-rich tracts occupy residues 19-43 (STGQ…ATGA), 71-81 (NARPAAPANAR), and 102-122 (TPAP…TNTR). Residues 133 to 146 (PQPEEREREREAVL) are compositionally biased toward basic and acidic residues. The segment covering 153-162 (TTTRPVMRPR) has biased composition (low complexity). The region spanning 249 to 418 (PRPPVVTIMG…LLVADLEDLR (170 aa)) is the tr-type G domain. The segment at 258–265 (GHVDHGKT) is G1. 258-265 (GHVDHGKT) contacts GTP. A G2 region spans residues 283 to 287 (GITQH). Residues 304-307 (DTPG) form a G3 region. GTP-binding positions include 304-308 (DTPGH) and 358-361 (NKID). The G4 stretch occupies residues 358–361 (NKID). The interval 394 to 396 (SAR) is G5.

The protein belongs to the TRAFAC class translation factor GTPase superfamily. Classic translation factor GTPase family. IF-2 subfamily.

The protein resides in the cytoplasm. One of the essential components for the initiation of protein synthesis. Protects formylmethionyl-tRNA from spontaneous hydrolysis and promotes its binding to the 30S ribosomal subunits. Also involved in the hydrolysis of GTP during the formation of the 70S ribosomal complex. The chain is Translation initiation factor IF-2 from Chloroflexus aggregans (strain MD-66 / DSM 9485).